Consider the following 370-residue polypeptide: Pantothenate kinase 3 (370 aa).

Glu-138 serves as the catalytic Proton acceptor. Acetyl-CoA-binding residues include Ser-192, Ser-195, and Arg-207.

Belongs to the type II pantothenate kinase family. Homodimer.

The protein resides in the cytoplasm. It carries out the reaction (R)-pantothenate + ATP = (R)-4'-phosphopantothenate + ADP + H(+). It functions in the pathway cofactor biosynthesis; coenzyme A biosynthesis; CoA from (R)-pantothenate: step 1/5. Its activity is regulated as follows. Subject to allosteric regulation, exists in two distinct conformational states, a catalytically incompetent (or open) conformation stabilized by the binding of acetyl(acyl)-CoA, and a catalytically competent (or closed) conformation stabilized by ATP-binding. Inhibited by acetyl-CoA and its thioesters which act as allosteric inhibitors and compete with the ATP-binding site. Catalyzes the phosphorylation of pantothenate to generate 4'-phosphopantothenate in the first and rate-determining step of coenzyme A (CoA) synthesis. The chain is Pantothenate kinase 3 (PANK3) from Bos taurus (Bovine).